Consider the following 245-residue polypeptide: Phycocyanobilin:ferredoxin oxidoreductase (245 aa).

This sequence belongs to the HY2 family.

It carries out the reaction (2R,3Z)-phycocyanobilin + 4 oxidized [2Fe-2S]-[ferredoxin] = biliverdin IXalpha + 4 reduced [2Fe-2S]-[ferredoxin] + 4 H(+). Functionally, catalyzes the four-electron reduction of biliverdin IX-alpha (2-electron reduction at both the A and D rings); the reaction proceeds via an isolatable 2-electron intermediate, 181,182-dihydrobiliverdin. In Nostoc punctiforme (strain ATCC 29133 / PCC 73102), this protein is Phycocyanobilin:ferredoxin oxidoreductase (pcyA).